We begin with the raw amino-acid sequence, 322 residues long: Ferredoxin--NADP reductase (322 aa).

Aspartate 34, glutamine 42, tyrosine 47, valine 87, phenylalanine 120, aspartate 279, and threonine 320 together coordinate FAD.

Belongs to the ferredoxin--NADP reductase type 2 family. As to quaternary structure, homodimer. FAD serves as cofactor.

The enzyme catalyses 2 reduced [2Fe-2S]-[ferredoxin] + NADP(+) + H(+) = 2 oxidized [2Fe-2S]-[ferredoxin] + NADPH. This Streptococcus pneumoniae serotype 2 (strain D39 / NCTC 7466) protein is Ferredoxin--NADP reductase.